A 506-amino-acid chain; its full sequence is Dolabradiene monooxygenase (506 aa).

The chain crosses the membrane as a helical span at residues 5–25 (VLLAVAMVALIAVLSKLKSLL). Cys-443 contributes to the heme binding site.

Belongs to the cytochrome P450 family. It depends on heme as a cofactor.

It localises to the membrane. It carries out the reaction dolabradiene + reduced [NADPH--hemoprotein reductase] + O2 = 15,16-epoxydolabrene + oxidized [NADPH--hemoprotein reductase] + H2O + H(+). The enzyme catalyses 15,16-epoxydolabrene + reduced [NADPH--hemoprotein reductase] + O2 = 3beta-hydroxy-15,16-epoxydolabrene + oxidized [NADPH--hemoprotein reductase] + H2O + H(+). Functionally, involved in the production of antifungal dolabralexin phytoalexins in response to biotic and abiotic stresses. Catalyzes the epoxidation of dolabradiene at C-16, followed by hydroxylation at C-3, to yield the epoxides 15,16-epoxydolabrene (epoxydolabrene) and 3b-hydroxy-15,16-epoxydolabrene (epoxydolabranol). This Zea mays (Maize) protein is Dolabradiene monooxygenase.